A 293-amino-acid polypeptide reads, in one-letter code: Undecaprenyl-diphosphatase (293 aa).

The next 7 helical transmembrane spans lie at 57–77, 106–126, 134–154, 172–192, 212–232, 239–259, and 268–288; these read PGVSATAVIQLGSILAVIVYF, LAIAIGTMPILLAGMAIKLFW, IRSLPSIAVVSIVMALLLALA, GFVVGLAQALALIPGVSRSGS, FLLGIPAITLAGLVELKDAFA, VLPLLVGIVSAAFVSWLAIDW, and STWIFVAYRLLFGVLVLAWWL.

The protein belongs to the UppP family.

The protein resides in the cell inner membrane. It catalyses the reaction di-trans,octa-cis-undecaprenyl diphosphate + H2O = di-trans,octa-cis-undecaprenyl phosphate + phosphate + H(+). In terms of biological role, catalyzes the dephosphorylation of undecaprenyl diphosphate (UPP). Confers resistance to bacitracin. This is Undecaprenyl-diphosphatase from Prochlorococcus marinus (strain MIT 9303).